Reading from the N-terminus, the 135-residue chain is RuBisCO chaperone RbcX (135 aa).

The tract at residues 103–135 is disordered; the sequence is QHLERMTQVSLSHPSPESEQQQFSDPDWDNLAS. Residues 109–126 show a composition bias toward polar residues; that stretch reads TQVSLSHPSPESEQQQFS.

This sequence belongs to the RbcX family. As to quaternary structure, homodimer. Interacts with the exposed C-terminal peptide of RbcL ('Glu-459-Asp-468'); binds 1 RbcL peptide per homodimer. Contacts a second RbcL monomer via its peripheral polar surface. A slightly longer RbcL peptide binds to RbcX2 with a higher affinity.

The protein localises to the carboxysome. It is found in the cytoplasm. Functionally, an RbcL-specific chaperone. The central cleft of the RbcX homodimer (RbcX2) binds the C-terminus of an RbcL monomer, stabilizing the C-terminus and probably preventing its reassociation with chaperonin GroEL-ES. At the same time the peripheral region of RbcX2 binds a second RbcL monomer, bridging the RbcL homodimers in the correct orientation. The RbcX2(2)-bound RbcL dimers then assemble into the RbcL8 core (RbcL8-(RbcX2)8). RbcS binding triggers the release of RbcX2. Required for optimal reconstitution of RuBisCO upon expression of rbcL-rbcS subunits in E.coli. This chain is RuBisCO chaperone RbcX, found in Anabaena sp. (strain CA / ATCC 33047).